Reading from the N-terminus, the 440-residue chain is Histidinol dehydrogenase (440 aa).

NAD(+)-binding residues include Tyr-139, Gln-200, and Asn-223. 3 residues coordinate substrate: Ser-246, Gln-268, and His-271. 2 residues coordinate Zn(2+): Gln-268 and His-271. Catalysis depends on proton acceptor residues Glu-336 and His-337. Substrate-binding residues include His-337, Asp-370, Glu-424, and His-429. Asp-370 provides a ligand contact to Zn(2+). Zn(2+) is bound at residue His-429.

The protein belongs to the histidinol dehydrogenase family. The cofactor is Zn(2+).

It catalyses the reaction L-histidinol + 2 NAD(+) + H2O = L-histidine + 2 NADH + 3 H(+). Its pathway is amino-acid biosynthesis; L-histidine biosynthesis; L-histidine from 5-phospho-alpha-D-ribose 1-diphosphate: step 9/9. Catalyzes the sequential NAD-dependent oxidations of L-histidinol to L-histidinaldehyde and then to L-histidine. In Bordetella bronchiseptica (strain ATCC BAA-588 / NCTC 13252 / RB50) (Alcaligenes bronchisepticus), this protein is Histidinol dehydrogenase.